A 160-amino-acid chain; its full sequence is Prostaglandin E synthase 3 (160 aa).

A CS domain is found at 1-90 (MQPASAKWYD…ESGQSWPRLT (90 aa)). K33 carries the post-translational modification N6-acetyllysine. Residue K35 forms a Glycyl lysine isopeptide (Lys-Gly) (interchain with G-Cter in SUMO2) linkage. A Phosphoserine modification is found at S44. A Glycyl lysine isopeptide (Lys-Gly) (interchain with G-Cter in SUMO2) cross-link involves residue K65. S85, S100, S113, and S118 each carry phosphoserine. The interval 118–160 (SNFDRFSEMMDHMGGDEDVDLPEVDGADDDSQDSDDEKMPDLE) is disordered. A compositionally biased stretch (basic and acidic residues) spans 122 to 132 (RFSEMMDHMGG). The segment covering 133-153 (DEDVDLPEVDGADDDSQDSDD) has biased composition (acidic residues). Phosphoserine occurs at positions 148 and 151. Positions 157 to 160 (PDLE) match the PXLE motif motif.

This sequence belongs to the p23/wos2 family. In terms of assembly, probably forms a complex composed of chaperones HSP90 and HSP70, co-chaperones STIP1/HOP, CDC37, PPP5C, PTGES3/p23, TSC1 and client protein TSC2. Binds to the progesterone receptor. Interacts with TERT; the interaction, together with HSP90AA1, is required for correct assembly and stabilization of the telomerase holoenzyme complex. Interacts (via PXLE motif) with EGLN1/PHD2, recruiting EGLN1/PHD2 to the HSP90 pathway to facilitate HIF alpha proteins hydroxylation. Interacts with HSP90AA1, FLCN, FNIP1 and FNIP2. Proteolytically cleaved by caspase-7 (CASP7) in response to apoptosis, leading to its inactivation. In terms of tissue distribution, expressed in testis, kidney, bladder and ovary.

The protein resides in the cytoplasm. The catalysed reaction is prostaglandin H2 = prostaglandin E2. It functions in the pathway lipid metabolism; prostaglandin biosynthesis. Its function is as follows. Cytosolic prostaglandin synthase that catalyzes the oxidoreduction of prostaglandin endoperoxide H2 (PGH2) to prostaglandin E2 (PGE2). Molecular chaperone that localizes to genomic response elements in a hormone-dependent manner and disrupts receptor-mediated transcriptional activation, by promoting disassembly of transcriptional regulatory complexes. Facilitates HIF alpha proteins hydroxylation via interaction with EGLN1/PHD2, leading to recruit EGLN1/PHD2 to the HSP90 pathway. The chain is Prostaglandin E synthase 3 (Ptges3) from Mus musculus (Mouse).